The following is a 334-amino-acid chain: Protein-methionine-sulfoxide reductase catalytic subunit MsrP (334 aa).

A signal peptide (tat-type signal) is located at residues 1–44 (MKKIRKLTEADVTAESAFFMQRRQVLKALGISAAALSLPNAAHA). Residues Asn88, 91–92 (YE), Cys146, Thr181, Asn233, Arg238, and 249–251 (GIK) contribute to the Mo-molybdopterin site.

It belongs to the MsrP family. Heterodimer of a catalytic subunit (MsrP) and a heme-binding subunit (MsrQ). Mo-molybdopterin serves as cofactor. Post-translationally, predicted to be exported by the Tat system. The position of the signal peptide cleavage has not been experimentally proven.

It localises to the periplasm. It catalyses the reaction L-methionyl-[protein] + a quinone + H2O = L-methionyl-(S)-S-oxide-[protein] + a quinol. The catalysed reaction is L-methionyl-[protein] + a quinone + H2O = L-methionyl-(R)-S-oxide-[protein] + a quinol. In terms of biological role, part of the MsrPQ system that repairs oxidized periplasmic proteins containing methionine sulfoxide residues (Met-O), using respiratory chain electrons. Thus protects these proteins from oxidative-stress damage caused by reactive species of oxygen and chlorine generated by the host defense mechanisms. MsrPQ is essential for the maintenance of envelope integrity under bleach stress, rescuing a wide series of structurally unrelated periplasmic proteins from methionine oxidation, including the primary periplasmic chaperone SurA and the lipoprotein Pal. The catalytic subunit MsrP is non-stereospecific, being able to reduce both (R-) and (S-) diastereoisomers of methionine sulfoxide. The chain is Protein-methionine-sulfoxide reductase catalytic subunit MsrP from Escherichia fergusonii (strain ATCC 35469 / DSM 13698 / CCUG 18766 / IAM 14443 / JCM 21226 / LMG 7866 / NBRC 102419 / NCTC 12128 / CDC 0568-73).